The primary structure comprises 276 residues: Foldase protein PrsA (276 aa).

The N-terminal stretch at 1–18 (MRKWMIVAAVAAVFGLSA) is a signal peptide. Residue Cys-19 is the site of N-palmitoyl cysteine attachment. Residue Cys-19 is the site of S-diacylglycerol cysteine attachment. One can recognise a PpiC domain in the interval 133 to 223 (KPKIRASHIL…YGYHIIKVTD (91 aa)).

Belongs to the PrsA family.

The protein localises to the cell membrane. The enzyme catalyses [protein]-peptidylproline (omega=180) = [protein]-peptidylproline (omega=0). In terms of biological role, plays a major role in protein secretion by helping the post-translocational extracellular folding of several secreted proteins. The chain is Foldase protein PrsA from Geobacillus sp. (strain WCH70).